The sequence spans 202 residues: Small ribosomal subunit protein uS4c (202 aa).

An S4 RNA-binding domain is found at 90–148 (MRLDNVIFRLGMSSTIPGARQLVNHRHIMINDEMVDTPGYNCKPRDIITLKNISESRSG).

The protein belongs to the universal ribosomal protein uS4 family. In terms of assembly, part of the 30S ribosomal subunit. Contacts protein S5. The interaction surface between S4 and S5 is involved in control of translational fidelity.

Its subcellular location is the plastid. It is found in the chloroplast. Its function is as follows. One of the primary rRNA binding proteins, it binds directly to 16S rRNA where it nucleates assembly of the body of the 30S subunit. With S5 and S12 plays an important role in translational accuracy. The sequence is that of Small ribosomal subunit protein uS4c (rps4) from Haplomitrium hookeri (Hooker's flapwort).